The primary structure comprises 498 residues: WD repeat-containing protein 55 homolog (498 aa).

The disordered stretch occupies residues 1 to 131 (MHTHNNFKTP…ATFDLDEDDE (131 aa)). Acidic residues-rich tracts occupy residues 12–23 (DEDELDDLDEDM) and 31–48 (IEQE…EYDL). Composition is skewed to low complexity over residues 67–82 (NDSS…NAAD) and 93–103 (AGGVTAGGATS). WD repeat units lie at residues 154 to 193 (KLED…NKLL), 198 to 237 (VHSK…LKKL), 241 to 279 (AHDD…AIFE), 282 to 321 (ELED…MYVQ), 324 to 363 (PYEE…YHCD), and 408 to 447 (QHNM…DFGD). Residues 478–498 (DLTKENADGDDDPGAGPSNMA) form a disordered region.

Belongs to the WD repeat WDR55 family.

The protein is WD repeat-containing protein 55 homolog of Drosophila melanogaster (Fruit fly).